The sequence spans 478 residues: Sulfate adenylyltransferase subunit 1 (478 aa).

The region spanning 24–240 (KSLLRFLTCG…VLENVDIDAD (217 aa)) is the tr-type G domain. Positions 33–40 (GSVDDGKS) are G1. A GTP-binding site is contributed by 33–40 (GSVDDGKS). Residues 91 to 95 (GITID) are G2. The interval 112 to 115 (DTPG) is G3. GTP is bound by residues 112-116 (DTPGH) and 167-170 (NKMD). The interval 167–170 (NKMD) is G4. The tract at residues 206–208 (SAL) is G5.

The protein belongs to the TRAFAC class translation factor GTPase superfamily. Classic translation factor GTPase family. CysN/NodQ subfamily. In terms of assembly, heterodimer composed of CysD, the smaller subunit, and CysN.

The catalysed reaction is sulfate + ATP + H(+) = adenosine 5'-phosphosulfate + diphosphate. The protein operates within sulfur metabolism; hydrogen sulfide biosynthesis; sulfite from sulfate: step 1/3. Its function is as follows. With CysD forms the ATP sulfurylase (ATPS) that catalyzes the adenylation of sulfate producing adenosine 5'-phosphosulfate (APS) and diphosphate, the first enzymatic step in sulfur assimilation pathway. APS synthesis involves the formation of a high-energy phosphoric-sulfuric acid anhydride bond driven by GTP hydrolysis by CysN coupled to ATP hydrolysis by CysD. The sequence is that of Sulfate adenylyltransferase subunit 1 from Aliivibrio fischeri (strain MJ11) (Vibrio fischeri).